A 361-amino-acid polypeptide reads, in one-letter code: tRNA 2-selenouridine synthase (361 aa).

In terms of domain architecture, Rhodanese spans 11 to 134 (LIADTPLIDV…LRQTAIQATW (124 aa)). The S-selanylcysteine intermediate role is filled by C94.

This sequence belongs to the SelU family. In terms of assembly, monomer.

It catalyses the reaction 5-methylaminomethyl-2-thiouridine(34) in tRNA + selenophosphate + (2E)-geranyl diphosphate + H2O + H(+) = 5-methylaminomethyl-2-selenouridine(34) in tRNA + (2E)-thiogeraniol + phosphate + diphosphate. The enzyme catalyses 5-methylaminomethyl-2-thiouridine(34) in tRNA + (2E)-geranyl diphosphate = 5-methylaminomethyl-S-(2E)-geranyl-thiouridine(34) in tRNA + diphosphate. It carries out the reaction 5-methylaminomethyl-S-(2E)-geranyl-thiouridine(34) in tRNA + selenophosphate + H(+) = 5-methylaminomethyl-2-(Se-phospho)selenouridine(34) in tRNA + (2E)-thiogeraniol. The catalysed reaction is 5-methylaminomethyl-2-(Se-phospho)selenouridine(34) in tRNA + H2O = 5-methylaminomethyl-2-selenouridine(34) in tRNA + phosphate. Its function is as follows. Involved in the post-transcriptional modification of the uridine at the wobble position (U34) of tRNA(Lys), tRNA(Glu) and tRNA(Gln). Catalyzes the conversion of 2-thiouridine (S2U-RNA) to 2-selenouridine (Se2U-RNA). Acts in a two-step process involving geranylation of 2-thiouridine (S2U) to S-geranyl-2-thiouridine (geS2U) and subsequent selenation of the latter derivative to 2-selenouridine (Se2U) in the tRNA chain. The protein is tRNA 2-selenouridine synthase of Salmonella arizonae (strain ATCC BAA-731 / CDC346-86 / RSK2980).